The following is a 416-amino-acid chain: Glutamyl-tRNA reductase (416 aa).

Substrate contacts are provided by residues 51 to 54, serine 110, 115 to 117, and glutamine 121; these read TCNR and EPQ. Cysteine 52 (nucleophile) is an active-site residue. 190 to 195 is a binding site for NADP(+); the sequence is GAGQTG.

This sequence belongs to the glutamyl-tRNA reductase family. As to quaternary structure, homodimer.

The enzyme catalyses (S)-4-amino-5-oxopentanoate + tRNA(Glu) + NADP(+) = L-glutamyl-tRNA(Glu) + NADPH + H(+). It functions in the pathway porphyrin-containing compound metabolism; protoporphyrin-IX biosynthesis; 5-aminolevulinate from L-glutamyl-tRNA(Glu): step 1/2. Catalyzes the NADPH-dependent reduction of glutamyl-tRNA(Glu) to glutamate 1-semialdehyde (GSA). The chain is Glutamyl-tRNA reductase from Francisella tularensis subsp. holarctica (strain OSU18).